The chain runs to 115 residues: uncharacterized protein (115 aa).

Helical transmembrane passes span 6-26 (ILIILVIILTTYFTRIWPFMV), 43-63 (ALSCSVIGMLVIYCFKDIHIL), and 84-104 (IFKVFVLSITLPTILYMVLVQ).

The protein belongs to the AzlD/HI_1737/HP1330 family.

The protein resides in the cell membrane. This is an uncharacterized protein from Helicobacter pylori (strain ATCC 700392 / 26695) (Campylobacter pylori).